Reading from the N-terminus, the 261-residue chain is Glutamate racemase (261 aa).

Substrate is bound by residues 9 to 10 (DS) and 41 to 42 (YG). Residue Cys73 is the Proton donor/acceptor of the active site. 74–75 (NT) contacts substrate. Residue Cys179 is the Proton donor/acceptor of the active site. Residue 180–181 (TH) coordinates substrate.

The protein belongs to the aspartate/glutamate racemases family.

The catalysed reaction is L-glutamate = D-glutamate. It participates in cell wall biogenesis; peptidoglycan biosynthesis. Its function is as follows. Provides the (R)-glutamate required for cell wall biosynthesis. This chain is Glutamate racemase, found in Aliivibrio fischeri (strain MJ11) (Vibrio fischeri).